The chain runs to 132 residues: Holo-[acyl-carrier-protein] synthase (132 aa).

Mg(2+)-binding residues include aspartate 8 and glutamate 64.

It belongs to the P-Pant transferase superfamily. AcpS family. Mg(2+) is required as a cofactor.

It localises to the cytoplasm. The catalysed reaction is apo-[ACP] + CoA = holo-[ACP] + adenosine 3',5'-bisphosphate + H(+). Functionally, transfers the 4'-phosphopantetheine moiety from coenzyme A to a Ser of acyl-carrier-protein. The chain is Holo-[acyl-carrier-protein] synthase from Shewanella sediminis (strain HAW-EB3).